The chain runs to 396 residues: S-adenosylmethionine synthase (396 aa).

Glutamate 11 lines the Mg(2+) pocket. Histidine 17 lines the ATP pocket. Residue glutamate 45 coordinates K(+). L-methionine contacts are provided by glutamate 58 and glutamine 101. ATP contacts are provided by residues 169-171 (DGK), 237-240 (SGRF), aspartate 248, 254-255 (RK), alanine 271, lysine 275, and lysine 279. Aspartate 248 contributes to the L-methionine binding site. L-methionine is bound at residue lysine 279.

This sequence belongs to the AdoMet synthase family. Homotetramer. Mn(2+) serves as cofactor. The cofactor is Mg(2+). Requires Co(2+) as cofactor. K(+) is required as a cofactor.

It localises to the cytoplasm. The enzyme catalyses L-methionine + ATP + H2O = S-adenosyl-L-methionine + phosphate + diphosphate. It participates in amino-acid biosynthesis; S-adenosyl-L-methionine biosynthesis; S-adenosyl-L-methionine from L-methionine: step 1/1. Its function is as follows. Catalyzes the formation of S-adenosylmethionine from methionine and ATP. The reaction comprises two steps that are both catalyzed by the same enzyme: formation of S-adenosylmethionine (AdoMet) and triphosphate, and subsequent hydrolysis of the triphosphate. In Medicago sativa subsp. falcata (Sickle medic), this protein is S-adenosylmethionine synthase (SAMS).